We begin with the raw amino-acid sequence, 636 residues long: Methyl-CpG-binding domain protein 1 (636 aa).

The 69-residue stretch at 1–69 (MAESWQDCPA…TLFDFRQGTL (69 aa)) folds into the MBD domain. Positions 75 to 113 (KTHPLAVPSKKKKKPSKPAKTKKQQVGLQRSEVRIETPQ) are disordered. Residues 83 to 97 (SKKKKKPSKPAKTKK) are compositionally biased toward basic residues. Positions 84-88 (KKKKK) match the Nuclear localization signal motif. Residue Lys117 forms a Glycyl lysine isopeptide (Lys-Gly) (interchain with G-Cter in SUMO2) linkage. CXXC-type zinc fingers lie at residues 187-234 (RMFK…RRCL) and 235-281 (RIME…RRCF). Residues Cys194, Cys197, Cys200, Cys206, Cys209, Cys212, Cys228, Cys233, Cys243, Cys246, Cys249, Cys255, Cys258, Cys261, Cys275, and Cys280 each coordinate Zn(2+). Positions 291–314 (GSKVASQRHSQAPPLPPHPASQYT) are disordered. Lys293 participates in a covalent cross-link: Glycyl lysine isopeptide (Lys-Gly) (interchain with G-Cter in SUMO2). Residues 348 to 396 (TNQRQNRKCGACAACLRRMDCGRCDFCCDKPKFGGGNQKRQKCRWRQCL) form a CXXC-type 3 zinc finger. Zn(2+) is bound by residues Cys356, Cys359, Cys362, Cys368, Cys371, Cys374, Cys390, and Cys395. Positions 407 to 474 (AGSGSGEGAG…GRGSVLPQPD (68 aa)) are disordered. Ser409 bears the Phosphoserine mark. Residues Lys443 and Lys461 each participate in a glycyl lysine isopeptide (Lys-Gly) (interchain with G-Cter in SUMO2) cross-link. Glycyl lysine isopeptide (Lys-Gly) (interchain with G-Cter in SUMO2); alternate cross-links involve residues Lys520 and Lys559. The disordered stretch occupies residues 543-589 (QSGFPSKAADPDLSPVKQEPPGPEEDGEEKKDDVSETTPAEEIGGVG). Residues 550–612 (AADPDLSPVK…RLRDAEAWLP (63 aa)) are transcriptional repression domain (TRD).

In terms of assembly, interacts with OASL, ATF7IP, ATF7IP2 and BAHD1. Binds CHAF1A and the SUV39H1-CBX5 complex via the MBD domain. Binds MGP via the TRD domain. May be part of the MeCP1 complex. During DNA replication, it recruits SETDB1 to form a S phase-specific complex that facilitates methylation of H3 'Lys-9' during replication-coupled chromatin assembly and is at least composed of the CAF-1 subunit CHAF1A, MBD1 and SETDB1. Interacts with the Ten-1 ICD form of TENM1. Sumoylated, sumoylation may increase interaction with ATF7IP. Highly expressed in kidney, liver and brain. Detected at lower levels in heart, lung, skeletal muscle, spleen and testis.

The protein localises to the nucleus. It is found in the nucleus matrix. Its subcellular location is the nucleus speckle. It localises to the chromosome. Transcriptional repressor that binds CpG islands in promoters where the DNA is methylated at position 5 of cytosine within CpG dinucleotides. Binding is abolished by the presence of 7-mG that is produced by DNA damage by methylmethanesulfonate (MMS). Acts as transcriptional repressor and plays a role in gene silencing by recruiting ATF7IP, which in turn recruits factors such as the histone methyltransferase SETDB1. Probably forms a complex with SETDB1 and ATF7IP that represses transcription and couples DNA methylation and histone 'Lys-9' trimethylation. Isoform 1 can also repress transcription from unmethylated promoters. The sequence is that of Methyl-CpG-binding domain protein 1 from Mus musculus (Mouse).